We begin with the raw amino-acid sequence, 271 residues long: MIHRVSFYGKTTWFTKQHLIDWFLCLGIFVIESVLFNFVIPPFKRYEPESNISTNTFQLVQYPLLPDIVPVWLLMLIALGLPMVVFIGYYIKNRNSHDFHHAALGLFQAFTITMLFTDILKVSAGRYRPDYGARVATGIEAVIREGRVSFPSGHSSVSFCGMTFLSFYLCGKTKVFLKDGGNILKALVCLCPFMISALVAVSRTVDYHHDFSDILAGSVIGLSIGVFVYFMNFNSLFSKECSLPKNRINPHYARDGLLSAEYQSLSISSSL.

6 helical membrane passes run 23–43, 68–88, 102–122, 150–170, 181–201, and 211–231; these read FLCLGIFVIESVLFNFVIPPF, IVPVWLLMLIALGLPMVVFIG, AALGLFQAFTITMLFTDILKV, FPSGHSSVSFCGMTFLSFYLC, GNILKALVCLCPFMISALVAV, and FSDILAGSVIGLSIGVFVYFM.

This sequence belongs to the PA-phosphatase related phosphoesterase family.

It is found in the membrane. The sequence is that of PA-phosphatase related-family protein DDB_G0284367 from Dictyostelium discoideum (Social amoeba).